The chain runs to 354 residues: Protein RecA (354 aa).

67 to 74 contacts ATP; it reads GPESSGKT. Residues 333–354 are disordered; the sequence is MNEFVPSSEEQAEASLSEDHDQ.

Belongs to the RecA family.

It is found in the cytoplasm. Can catalyze the hydrolysis of ATP in the presence of single-stranded DNA, the ATP-dependent uptake of single-stranded DNA by duplex DNA, and the ATP-dependent hybridization of homologous single-stranded DNAs. It interacts with LexA causing its activation and leading to its autocatalytic cleavage. The polypeptide is Protein RecA (Laribacter hongkongensis (strain HLHK9)).